The following is a 117-amino-acid chain: Large ribosomal subunit protein uL18 (117 aa).

The protein belongs to the universal ribosomal protein uL18 family. Part of the 50S ribosomal subunit; part of the 5S rRNA/L5/L18/L25 subcomplex. Contacts the 5S and 23S rRNAs.

In terms of biological role, this is one of the proteins that bind and probably mediate the attachment of the 5S RNA into the large ribosomal subunit, where it forms part of the central protuberance. In Haemophilus influenzae (strain 86-028NP), this protein is Large ribosomal subunit protein uL18.